The sequence spans 481 residues: tRNA-2-methylthio-N(6)-dimethylallyladenosine synthase (481 aa).

The 117-residue stretch at 24-140 folds into the MTTase N-terminal domain; sequence KKLFIESYGC…LPNLLNEVEE (117 aa). Residues Cys-33, Cys-69, Cys-103, Cys-178, Cys-182, and Cys-185 each coordinate [4Fe-4S] cluster. Positions 164 to 411 constitute a Radical SAM core domain; sequence MSNGITALVA…DLQQKHAWWR (248 aa). Residues 413-476 enclose the TRAM domain; sequence EDFIGQTVEV…SGTLKGEAVG (64 aa).

Belongs to the methylthiotransferase family. MiaB subfamily. As to quaternary structure, monomer. The cofactor is [4Fe-4S] cluster.

The protein resides in the cytoplasm. It carries out the reaction N(6)-dimethylallyladenosine(37) in tRNA + (sulfur carrier)-SH + AH2 + 2 S-adenosyl-L-methionine = 2-methylsulfanyl-N(6)-dimethylallyladenosine(37) in tRNA + (sulfur carrier)-H + 5'-deoxyadenosine + L-methionine + A + S-adenosyl-L-homocysteine + 2 H(+). In terms of biological role, catalyzes the methylthiolation of N6-(dimethylallyl)adenosine (i(6)A), leading to the formation of 2-methylthio-N6-(dimethylallyl)adenosine (ms(2)i(6)A) at position 37 in tRNAs that read codons beginning with uridine. This Flavobacterium psychrophilum (strain ATCC 49511 / DSM 21280 / CIP 103535 / JIP02/86) protein is tRNA-2-methylthio-N(6)-dimethylallyladenosine synthase.